The sequence spans 386 residues: Acyl-CoA ligase lcsD (386 aa).

The interval 62–132 (ELEQTLLAIQ…ELLPACKIIQ (71 aa)) is SBD1. 107-115 (AVGASGISK) is an ATP binding site. An SBD2 region spans residues 133 to 195 (GYGMTETTGV…LRSPSVVIGY (63 aa)). Thr-137 lines the substrate pocket. The ATP site is built by Asp-216 and Arg-235. CoA-binding positions include 243–245 (RGL) and 313–316 (HLDG). Residue Lys-331 participates in ATP binding. The disordered stretch occupies residues 352–386 (REKAANGVHKVHVNGVKRPEKMEVFDLSSDDEDDD).

It belongs to the ATP-dependent AMP-binding enzyme family.

It functions in the pathway secondary metabolite biosynthesis. Its function is as follows. Acyl-CoA ligase; part of the gene cluster that mediates the biosynthesis of the lipopeptide antibiotics leucinostatins that show extensive biological activities, including antimalarial, antiviral, antibacterial, antifungal, and antitumor activities, as well as phytotoxic. Leucinostatin A contains nine amino acid residues, including the unusual amino acid 4-methyl-L-proline (MePro), 2-amino-6-hydroxy-4-methyl-8-oxodecanoic acid (AHyMeOA), 3-hydroxyleucine (HyLeu), alpha-aminoisobutyric acid (AIB), beta-Ala, a 4-methylhex-2-enoic acid at the N-terminus as well as a N1,N1-dimethylpropane-1,2-diamine (DPD) at the C-terminus. The biosynthesis of leucinostatins is probably initiated with the assembly of 4-methylhex-2-enoic acid by a reducing PKS. Two reducing polyketide synthases, lcsB and lcsC, have been identified in the cluster and it is not clear which is the one that assembles 4-methylhex-2-enoic acid since both contain KS, AT, DH, cMT, ER, KR and ACP domains. The polyketide residue might be transferred to the NRPS lcsA, mediated by two additional enzymes, the acyl-CoA ligase lcsD and the thioesterase lcsE. The linear polyketide carboxylic acid, which is released from PKS, is converted to a CoA thioester by lcsD, and then lcsE hydrolyzes the thiol bond and shuttles the polyketide intermediate to lcsA. The C domain of the first module catalyzed the condensation of 4-methylhex-2-enoic acid and MePro carried by domain A1, followed by successive condensations of nine amino acids to trigger the elongation of the linear peptide. A5 and A6 domains of lcsA are proposed to incorporate leucine, A2 AHyMeOA, and A3 incorporates HyLeu. A4, A7 and A8 incorporate AIB. The AHyMeOA in leucinostatin A activated by the A2 might be produced by the second PKS (lcsB or lcsC) present within the cluster. The MePro is probably produced via leucine cyclization and may originate from a separate pathway, independent of the cluster. Another nonproteinogenic amino acid, beta-Ala, could be produced by an aspartic acid decarboxylase also localized outside of the cluster. Two candidates are VFPBJ_01400 and VFPBJ_10476. The final peptide scaffold may be released by the NAD(P)H-dependent thioester reductase (TE) at the C-terminal region of lcsA. Transamination of the lcsA product by the transaminase lcsP may produce DPD at the C-terminus. Further hydroxylation steps performed alternatively by the cytochrome P450 monooxygenases lcsI, lcsK and lcsN then yield the non-methylated leucinostatins precursor. It is also possible that leucines can be hydroxylated prior to their incorporation into the peptide. Varying extents of methylation then lead to the formation of leucinostatins A and B. This Purpureocillium lilacinum (Paecilomyces lilacinus) protein is Acyl-CoA ligase lcsD.